A 211-amino-acid chain; its full sequence is 5,6-dimethylbenzimidazole synthase (211 aa).

Residues 22-26 (RRDVR), Ser50, Leu99, and Ser158 each bind FMN.

It belongs to the BluB family. Homooctamer.

It carries out the reaction FMNH2 + O2 = dialurate + 5,6-dimethylbenzimidazole + D-erythrose 4-phosphate + H(+). Its function is as follows. Involved in the biosynthesis of cobalamin (vitamin B12). Catalyzes the oxidative fragmentation and contraction of the isoalloxazine heterocycle and the cleavage of the ribityl tail of FMNH(2) to form 5,6-dimethylbenzimidazole (DMB) and D-erythrose 4-phosphate (E4P). NAD(P)H is only required initially to reduce FMN and oxygen drives the oxidative fragmentation. The sequence is that of 5,6-dimethylbenzimidazole synthase from Rhodospirillum rubrum (strain ATCC 11170 / ATH 1.1.1 / DSM 467 / LMG 4362 / NCIMB 8255 / S1).